We begin with the raw amino-acid sequence, 452 residues long: Probable receptor-like protein kinase At5g20050 (452 aa).

The N-terminal stretch at 1–23 (MEDKKANIIATILILALVVVIIA) is a signal peptide. Topologically, residues 24 to 33 (ARVSLKLSKT) are extracellular. Residues 34–54 (FYLIAGVDISLILAVICFLII) traverse the membrane as a helical segment. At 55–452 (RSRYNKERKL…SSIISPISPR (398 aa)) the chain is on the cytoplasmic side. In terms of domain architecture, Protein kinase spans 103–392 (DGFRSLIGKG…MVIEMLEGRV (290 aa)). ATP-binding positions include 109 to 117 (IGKGGSGSV) and Lys-131. Tyr-178 is subject to Phosphotyrosine. Asp-236 (proton acceptor) is an active-site residue. Phosphothreonine occurs at positions 270 and 275.

Belongs to the protein kinase superfamily. Ser/Thr protein kinase family.

The protein localises to the membrane. The catalysed reaction is L-seryl-[protein] + ATP = O-phospho-L-seryl-[protein] + ADP + H(+). It carries out the reaction L-threonyl-[protein] + ATP = O-phospho-L-threonyl-[protein] + ADP + H(+). The polypeptide is Probable receptor-like protein kinase At5g20050 (Arabidopsis thaliana (Mouse-ear cress)).